A 195-amino-acid polypeptide reads, in one-letter code: Flagellar transcriptional regulator FlhC (195 aa).

Residues C137, C140, C157, and C160 each coordinate Zn(2+). The interval 165–195 is disordered; the sequence is RAGSARRKTTTRKAVAPTHKTTAASRKAVVA.

It belongs to the FlhC family. Heterohexamer composed of two FlhC and four FlhD subunits. Each FlhC binds a FlhD dimer, forming a heterotrimer, and a hexamer assembles by dimerization of two heterotrimers. It depends on Zn(2+) as a cofactor.

The protein resides in the cytoplasm. Functionally, functions in complex with FlhD as a master transcriptional regulator that regulates transcription of several flagellar and non-flagellar operons by binding to their promoter region. Activates expression of class 2 flagellar genes, including fliA, which is a flagellum-specific sigma factor that turns on the class 3 genes. Also regulates genes whose products function in a variety of physiological pathways. This Thauera aminoaromatica protein is Flagellar transcriptional regulator FlhC.